We begin with the raw amino-acid sequence, 620 residues long: Cryptochrome-1 (620 aa).

A Photolyase/cryptochrome alpha/beta domain is found at 3 to 132 (VNAVHWFRKG…EVIVRISHTL (130 aa)). 3 consecutive short sequence motifs (LIR) follow at residues 50–54 (NRWRF), 82–87 (DVFPRL), and 151–156 (KRFQTL). An FAD-binding site is contributed by serine 252. Short sequence motifs (LIR) lie at residues 255–260 (LRFGCL), 271–276 (DLYKKV), 285–290 (SLYGQL), and 335–339 (TGFPW). Glutamine 289 serves as a coordination point for FAD. Histidine 355 provides a ligand contact to FAD. Residues 379–384 (KVFEEL) carry the LIR 8 motif. 387–389 (DAD) lines the FAD pocket. 5 short sequence motifs (LIR) span residues 395-400 (GSWMWL), 411-416 (HCYCPV), 430-435 (RRYLPV), 486-491 (QIYQQL), and 492-497 (SRYRGL). Residues 592–620 (GTGISAGKRPNPEEETQSVGPKVQRQSTN) are disordered.

The protein belongs to the DNA photolyase class-1 family. In terms of assembly, component of the circadian core oscillator, which includes the CRY proteins, CLOCK or NPAS2, BMAL1 or BMAL2, CSNK1E, and the PER proteins. FAD serves as cofactor. (6R)-5,10-methylene-5,6,7,8-tetrahydrofolate is required as a cofactor. Expressed in the retina. High levels found in ganglion cells of the retina.

It is found in the cytoplasm. It localises to the nucleus. In terms of biological role, transcriptional repressor which forms a core component of the circadian clock. The circadian clock, an internal time-keeping system, regulates various physiological processes through the generation of approximately 24 hour circadian rhythms in gene expression, which are translated into rhythms in metabolism and behavior. It is derived from the Latin roots 'circa' (about) and 'diem' (day) and acts as an important regulator of a wide array of physiological functions including metabolism, sleep, body temperature, blood pressure, endocrine, immune, cardiovascular, and renal function. Consists of two major components: the central clock, residing in the suprachiasmatic nucleus (SCN) of the brain, and the peripheral clocks that are present in nearly every tissue and organ system. Both the central and peripheral clocks can be reset by environmental cues, also known as Zeitgebers (German for 'timegivers'). The predominant Zeitgeber for the central clock is light, which is sensed by retina and signals directly to the SCN. The central clock entrains the peripheral clocks through neuronal and hormonal signals, body temperature and feeding-related cues, aligning all clocks with the external light/dark cycle. Circadian rhythms allow an organism to achieve temporal homeostasis with its environment at the molecular level by regulating gene expression to create a peak of protein expression once every 24 hours to control when a particular physiological process is most active with respect to the solar day. Transcription and translation of core clock components (CLOCK, NPAS2, BMAL1, BMAL2, PER1, PER2, PER3, CRY1 and CRY2) plays a critical role in rhythm generation, whereas delays imposed by post-translational modifications (PTMs) are important for determining the period (tau) of the rhythms (tau refers to the period of a rhythm and is the length, in time, of one complete cycle). A diurnal rhythm is synchronized with the day/night cycle, while the ultradian and infradian rhythms have a period shorter and longer than 24 hours, respectively. Disruptions in the circadian rhythms contribute to the pathology of cardiovascular diseases, cancer, metabolic syndromes and aging. A transcription/translation feedback loop (TTFL) forms the core of the molecular circadian clock mechanism. Transcription factors, CLOCK or NPAS2 and BMAL1 or BMAL2, form the positive limb of the feedback loop, act in the form of a heterodimer and activate the transcription of core clock genes and clock-controlled genes (involved in key metabolic processes), harboring E-box elements (5'-CACGTG-3') within their promoters. The core clock genes: PER1/2/3 and CRY1/2 which are transcriptional repressors form the negative limb of the feedback loop and interact with the CLOCK|NPAS2-BMAL1|BMAL2 heterodimer inhibiting its activity and thereby negatively regulating their own expression. This heterodimer also activates nuclear receptors NR1D1, NR1D2, RORA, RORB and RORG, which form a second feedback loop and which activate and repress BMAL1 transcription, respectively. CRY1 and CRY2 have redundant functions but also differential and selective contributions at least in defining the pace of the SCN circadian clock and its circadian transcriptional outputs. More potent transcriptional repressor in cerebellum and liver than CRY2, though more effective in lengthening the period of the SCN oscillator. On its side, CRY2 seems to play a critical role in tuning SCN circadian period by opposing the action of CRY1. With CRY2, is dispensable for circadian rhythm generation but necessary for the development of intercellular networks for rhythm synchrony. Capable of translocating circadian clock core proteins such as PER proteins to the nucleus. Interacts with CLOCK:BMAL1 independently of PER proteins and is found at CLOCK:BMAL1-bound sites, suggesting that CRY may act as a molecular gatekeeper to maintain CLOCK:BMAL1 in a poised and repressed state until the proper time for transcriptional activation. The chain is Cryptochrome-1 (CRY1) from Sylvia borin (Garden warbler).